The chain runs to 292 residues: Probable E3 ubiquitin-protein ligase RNF144A (292 aa).

The segment at 16–236 is TRIAD supradomain; it reads PLVSCKLCLG…YDKGPCRNKL (221 aa). Zn(2+) contacts are provided by cysteine 20, cysteine 23, cysteine 43, cysteine 46, cysteine 111, cysteine 116, cysteine 135, cysteine 138, cysteine 143, cysteine 146, histidine 151, cysteine 156, cysteine 185, and cysteine 188. The RING-type 1 zinc-finger motif lies at 20–70; sequence CKLCLGEYTVEQMTTIAQCQCIFCTLCLKQYVELLIKEGLETAISCPDASC. The IBR-type zinc finger occupies 91 to 156; sequence QKYKKLQFEK…KANWHPGQGC (66 aa). An RING-type 2; atypical zinc finger spans residues 185 to 214; sequence CPKCKVYIERDEGCAQMMCKNCKHAFCWYC. Cysteine 198 is an active-site residue. The Zn(2+) site is built by cysteine 203, cysteine 206, cysteine 211, cysteine 214, histidine 226, and cysteine 232. Residues 250–270 traverse the membrane as a helical segment; that stretch reads VVGIFAGFGLLLLVASPFLLL.

This sequence belongs to the RBR family. RNF144 subfamily.

It localises to the membrane. The catalysed reaction is [E2 ubiquitin-conjugating enzyme]-S-ubiquitinyl-L-cysteine + [acceptor protein]-L-lysine = [E2 ubiquitin-conjugating enzyme]-L-cysteine + [acceptor protein]-N(6)-ubiquitinyl-L-lysine.. It participates in protein modification; protein ubiquitination. Its function is as follows. E3 ubiquitin-protein ligase which accepts ubiquitin from E2 ubiquitin-conjugating enzymes ube2l3 and ube2l6 in the form of a thioester and then directly transfers the ubiquitin to targeted substrates. The protein is Probable E3 ubiquitin-protein ligase RNF144A (rnf144a) of Xenopus tropicalis (Western clawed frog).